Consider the following 582-residue polypeptide: MKRARPSEDTFNPVYPYDTETGPPTVPFLTPPFVSPNGFQESPPGVLSLRVSEPLDTSHGMLALKMGSGLTLDKAGNLTSQNVTTVTQPLKKTKSNISLDTSAPLTITSGALTVATTAPLIVTSGALSVQSQAPLTVQDSKLSIATKGPITVSDGKLALQTSAPLSGSDSDTLTVTASPPLTTATGSLGINMEDPIYVNNGKIGIKISGPLQVAQNSDTLTVVTGPGVTVEQNSLRTKVAGAIGYDSSNNMEIKTGGGMRINNNLLILDVDYPFDAQTKLRLKLGQGPLYINASHNLDINYNRGLYLFNASNNTKKLEVSIKKSSGLNFDNTAIAINAGKGLEFDTNTSESPDINPIKTKIGSGIDYNENGAMITKLGAGLSFDNSGAITIGNKNDDKLTLWTTPDPSPNCRIHSDNDCKFTLVLTKCGSQVLATVAALAVSGDLSSMTGTVASVSIFLRFDQNGVLMENSSLKKHYWNFRNGNSTNANPYTNAVGFMPNLLAYPKTQSQTAKNNIVSQVYLHGDKTKPMILTITLNGTSESTETSEVSTYSMSFTWSWESGKYTTETFATNSYTFSYIAQE.

The segment at 1–23 is disordered; sequence MKRARPSEDTFNPVYPYDTETGP. Residues 1–44 form a tail (penton base attachment) region; it reads MKRARPSEDTFNPVYPYDTETGPPTVPFLTPPFVSPNGFQESPP. Shaft repeat units follow at residues 45-59, 60-75, 76-95, 96-109, 110-124, 125-139, 140-154, 155-170, 171-185, 186-200, 201-217, 218-232, 233-248, 249-263, 264-277, 278-294, 295-314, 315-331, 332-354, 355-370, 371-386, and 387-392; these read GVLS…DTSH, GMLA…LDKA, GNLT…KTKS, NISL…TITS, GALT…IVTS, GALS…TVQD, SKLS…TVSD, GKLA…GSDS, DTLT…TTAT, GSLG…YVNN, GKIG…AQNS, DTLT…TVEQ, NSLR…YDSS, NNME…RINN, NLLI…FDAQ, TKLR…INAS, HNLD…SNNT, KKLE…NFDN, TAIA…SPDI, NPIK…YNEN, GAMI…FDNS, and GAITIG. Residues 45-392 are shaft region; the sequence is GVLSLRVSEP…FDNSGAITIG (348 aa). 2 positions are modified to phosphoserine; by host: Ser-325 and Ser-351. The segment at 393–398 is spacer; it reads NKNDDK. Positions 399–582 are head; the sequence is LTLWTTPDPS…SYTFSYIAQE (184 aa).

It belongs to the adenoviridae fiber family. Homotrimer; arranged in a triple beta-spiral. Interacts with host receptor CXADR. Interacts (via N-terminal tail region) with pentons. Post-translationally, O-glycosylated; glycans contain N-acetylglucosamine and may play a role in fiber assembly and stabilization.

It is found in the virion. It localises to the host nucleus. Functionally, forms spikes that protrude from each vertex of the icosahedral capsid. Interacts with host coxsackievirus and adenovirus receptor CXADR located at the cell tight junctions to provide virion initial attachment to target cell. The fiber protein binds to CXADR with a higher affinity than CXADR binds to itself, thereby blocking the cell-cell adhesion function of CXADR dimers and leading to local disruption of the tight junction. Fiber protein present on neo-synthesized particles may thus disrupt the junctional integrity in order to facilitate further neighboring cells infection. Fiber proteins are shed during virus entry, when virus is still at the cell surface. Fiber shedding is dependent on viral CXADR drifting motion and subsequent binding to immobile integrins. Heparan sulfate might also play a role in virus binding. In Human adenovirus C serotype 2 (HAdV-2), this protein is Fiber protein.